Consider the following 150-residue polypeptide: Urease accessory protein UreE (150 aa).

The protein belongs to the UreE family.

It is found in the cytoplasm. In terms of biological role, involved in urease metallocenter assembly. Binds nickel. Probably functions as a nickel donor during metallocenter assembly. This chain is Urease accessory protein UreE, found in Streptococcus salivarius (strain 57.I).